The following is a 171-amino-acid chain: 3-hydroxydecanoyl-[acyl-carrier-protein] dehydratase (171 aa).

His70 is a catalytic residue.

The protein belongs to the thioester dehydratase family. FabA subfamily. Homodimer.

The protein resides in the cytoplasm. The enzyme catalyses a (3R)-hydroxyacyl-[ACP] = a (2E)-enoyl-[ACP] + H2O. It catalyses the reaction (3R)-hydroxydecanoyl-[ACP] = (2E)-decenoyl-[ACP] + H2O. It carries out the reaction (2E)-decenoyl-[ACP] = (3Z)-decenoyl-[ACP]. It participates in lipid metabolism; fatty acid biosynthesis. In terms of biological role, necessary for the introduction of cis unsaturation into fatty acids. Catalyzes the dehydration of (3R)-3-hydroxydecanoyl-ACP to E-(2)-decenoyl-ACP and then its isomerization to Z-(3)-decenoyl-ACP. Can catalyze the dehydratase reaction for beta-hydroxyacyl-ACPs with saturated chain lengths up to 16:0, being most active on intermediate chain length. The polypeptide is 3-hydroxydecanoyl-[acyl-carrier-protein] dehydratase (Pseudomonas fluorescens (strain SBW25)).